The chain runs to 484 residues: Muscarinic acetylcholine receptor M4 (484 aa).

Topologically, residues 1–32 are extracellular; that stretch reads MENDTWENESSASNHSIDETIVEIPGKYQTME. Residues Asn3, Asn8, and Asn14 are each glycosylated (N-linked (GlcNAc...) asparagine). The chain crosses the membrane as a helical span at residues 33-55; it reads MIFIATVTGSLSLVTVVGNILVM. Residues 56-69 lie on the Cytoplasmic side of the membrane; sequence LSIKVNRQLQTVNN. Residues 70–90 traverse the membrane as a helical segment; the sequence is YFLFSLACADLIIGVFSMNLY. Residues 91-107 are Extracellular-facing; the sequence is SLYIIKGYWPLGPIVCD. Cys106 and Cys186 are oxidised to a cystine. The helical transmembrane segment at 108-129 threads the bilayer; it reads LWLALDYVVSNASVMNLLIISL. Residues 130–149 are Cytoplasmic-facing; the sequence is ERXFCVTKPLTYPARRTTKM. Residues 150-172 traverse the membrane as a helical segment; that stretch reads AGLMIAAAWLLSFELWAPAILFW. Residues 173 to 194 are Extracellular-facing; sequence QFIVGQRTVPSGECYIQFLSNP. A helical membrane pass occupies residues 195–217; sequence AVTFGTAIAAFYLPVVIMTILYI. Topologically, residues 218–406 are cytoplasmic; that stretch reads HISLASRSRV…AAREKKVTRT (189 aa). The disordered stretch occupies residues 255–316; the sequence is NIPKQDAGDK…EKQPLSEASS (62 aa). Residues 260–270 are compositionally biased toward basic and acidic residues; that stretch reads DAGDKVVEKKN. Residues 407–427 traverse the membrane as a helical segment; it reads IFAILLAFIITWTPYNVMVLI. Residues 428 to 441 are Extracellular-facing; it reads NTFCQTCIPETIWY. Residues 442–461 form a helical membrane-spanning segment; the sequence is IGYWLCYVNSTINPACYALC. The Cytoplasmic portion of the chain corresponds to 462–484; the sequence is NATFKKTFKHLLMCQYKSIGTAR.

The protein belongs to the G-protein coupled receptor 1 family. Muscarinic acetylcholine receptor subfamily. CHRM4 sub-subfamily.

The protein localises to the cell membrane. It localises to the postsynaptic cell membrane. Functionally, the muscarinic acetylcholine receptor mediates various cellular responses, including inhibition of adenylate cyclase, breakdown of phosphoinositides and modulation of potassium channels through the action of G proteins. Primary transducing effect is inhibition of adenylate cyclase. The chain is Muscarinic acetylcholine receptor M4 (chrm4) from Xenopus laevis (African clawed frog).